The primary structure comprises 75 residues: MGSLQLTLVLFVLLSYVPPVRSGVNMYIKRIYDTCWKLKGICRNTCQKEEIYHIFCGIQSLCCLEKKEMPVLFVK.

An N-terminal signal peptide occupies residues 1 to 22; that stretch reads MGSLQLTLVLFVLLSYVPPVRS. Intrachain disulfides connect cysteine 35-cysteine 62, cysteine 42-cysteine 56, and cysteine 46-cysteine 63.

The protein belongs to the beta-defensin family.

Its subcellular location is the secreted. In terms of biological role, has antibacterial activity. The protein is Beta-defensin 30 (Defb30) of Mus musculus (Mouse).